We begin with the raw amino-acid sequence, 299 residues long: N-carbamoylputrescine amidase (299 aa).

Positions 10-268 (VVVSSLQFAC…EAVLVAQFDL (259 aa)) constitute a CN hydrolase domain. E49 acts as the Proton acceptor in catalysis. Residue K122 is the Proton donor of the active site. C159 serves as the catalytic Nucleophile.

Belongs to the carbon-nitrogen hydrolase superfamily. Homooctamer (isoform 2). As to expression, expressed in roots, stems, leaves and flowers.

The enzyme catalyses N-carbamoylputrescine + H2O + 2 H(+) = putrescine + NH4(+) + CO2. It functions in the pathway amine and polyamine biosynthesis; putrescine biosynthesis via agmatine pathway; putrescine from N-carbamoylputrescine (amidase route): step 1/1. In terms of biological role, involved in polyamine biosynthesis. Catalyzes the hydrolysis of N-carbamoylputrescine to produce putrescine and ammonia. The chain is N-carbamoylputrescine amidase from Arabidopsis thaliana (Mouse-ear cress).